A 516-amino-acid polypeptide reads, in one-letter code: Amino-acid permease BAT1 (516 aa).

Transmembrane regions (helical) follow at residues 33–53 (LSVF…TGIT), 70–90 (YGWF…AEIC), 113–133 (PLAS…VTAS), 164–184 (VVIG…SLPI), 189–209 (FIGQ…MILI), 232–252 (LGIT…QYTI), 275–295 (GIIS…LGIS), 328–348 (FGSG…VFFC), 383–403 (VPIN…LTSL), 406–426 (IVAF…AYAI), 452–472 (VVGW…SLPV), and 483–503 (YTPV…LFSA).

The protein belongs to the amino acid-polyamine-organocation (APC) superfamily. Amino acid/choline transporter (ACT) (TC 2.A.3.4) family. Expressed in roots, rosette leaves, stems, cauline leaves, flowers and siliques.

Its subcellular location is the mitochondrion membrane. Its function is as follows. May play a role in primary carbon metabolism and plant growth, by mediating the transport of GABA from the cytosol to mitochondria. When expressed in a heterologous system (yeast), imports Arg and Ala across the plasma membrane and exports Lys and Glu, but does not transport proline. In Arabidopsis thaliana (Mouse-ear cress), this protein is Amino-acid permease BAT1 (BAT1).